Consider the following 439-residue polypeptide: Probable RNA-binding protein 23 (439 aa).

Residues 13–159 form a disordered region; the sequence is MLEAPYKKEE…PVREPVDNLS (147 aa). Positions 17-34 are enriched in basic and acidic residues; that stretch reads PYKKEEDEQQRKEVKKDY. The span at 36-57 shows a compositional bias: low complexity; it reads SNTTSSTSNSGNETSGSSTIGE. Residues 60–90 show a composition bias toward basic residues; the sequence is KKKRSRSHNKSRDRKRSRSRDRDRYRRRNSR. Over residues 103–125 the composition is skewed to basic and acidic residues; that stretch reads RSWDRRHGSESRSRDHRREDRVH. Residues S128 and S149 each carry the phosphoserine modification. Residues 144–159 are compositionally biased toward basic and acidic residues; it reads HFREKSPVREPVDNLS. RRM domains lie at 166-243 and 263-341; these read RTVF…ASQA and MRLY…HVTE.

It belongs to the splicing factor SR family. Post-translationally, aryl sulfonamide anticancer drugs, such as indisulam (E7070) or E7820, promote ubiquitination and subsequent degradation by the DCX(DCAF15) complex. Aryl sulfonamide anticancer drugs change the substrate specificity of DCAF15 by acting as a molecular glue that promotes binding between DCAF15 and weak affinity interactor RBM23. As to expression, highly expressed in placenta, liver, skeletal muscle, heart and kidney. Expressed at lower levels in the colon, thymus, spleen, small intestine and lung.

The protein resides in the nucleus. Functionally, RNA-binding protein that acts both as a transcription coactivator and pre-mRNA splicing factor. Regulates steroid hormone receptor-mediated transcription, independently of the pre-mRNA splicing factor activity. The chain is Probable RNA-binding protein 23 from Homo sapiens (Human).